A 159-amino-acid chain; its full sequence is Abscisic acid and environmental stress-inducible protein (159 aa).

Repeat copies occupy residues 38-49 (GGGYNHGGGGYN), 50-61 (GGGYNHGGGGYN), 63-74 (GGGYNHGGGGYN), 77-88 (GGGYNHGGGGYN), 91-102 (GGGYNHGGGGYN), and 105-116 (GGGYNHGGGGYN). The 7 X 12 AA repeats of G-G-G-Y-N-H-G-G-G-Y-N stretch occupies residues 38–135 (GGGYNHGGGG…GYNHGGGGCQ (98 aa)). The 7; approximate repeat unit spans residues 124-135 (GGGYNHGGGGCQ).

Belongs to the GRP family.

The polypeptide is Abscisic acid and environmental stress-inducible protein (Medicago sativa subsp. falcata (Sickle medic)).